Consider the following 235-residue polypeptide: Peptidase E (235 aa).

Residues S122, D137, and H159 each act as charge relay system in the active site.

This sequence belongs to the peptidase S51 family.

It is found in the cytoplasm. It carries out the reaction Dipeptidase E catalyzes the hydrolysis of dipeptides Asp-|-Xaa. It does not act on peptides with N-terminal Glu, Asn or Gln, nor does it cleave isoaspartyl peptides.. Functionally, hydrolyzes dipeptides containing N-terminal aspartate residues. May play a role in allowing the cell to use peptide aspartate to spare carbon otherwise required for the synthesis of the aspartate family of amino acids. The sequence is that of Peptidase E from Shewanella denitrificans (strain OS217 / ATCC BAA-1090 / DSM 15013).